Reading from the N-terminus, the 182-residue chain is uncharacterized protein (182 aa).

This sequence belongs to the staphylococcal tandem lipoprotein family.

This is an uncharacterized protein from Staphylococcus haemolyticus (strain JCSC1435).